A 725-amino-acid polypeptide reads, in one-letter code: Exocyst complex component 8 (725 aa).

Ser19 bears the Phosphoserine mark. A disordered region spans residues 137–159 (AGFFSTPGGASRDGSGPGEEGKQ). At Thr142 the chain carries Phosphothreonine. The region spanning 182–282 (YLVYNGDLVE…WLEVLEDTKR (101 aa)) is the PH domain. The tract at residues 285–328 (SEKRRREQEEAAAPRGPPQVTSKATNPFEDDEEEEPAVPEVEEE) is disordered. A compositionally biased stretch (acidic residues) spans 312–328 (FEDDEEEEPAVPEVEEE).

The protein belongs to the EXO84 family. In terms of assembly, the exocyst complex is composed of EXOC1, EXOC2, EXOC3, EXOC4, EXOC5, EXOC6, EXOC7 and EXOC8. Interacts (via PH domain) with GTP-bound RALA and RALB. Interacts with SH3BP1; required for the localization of both SH3BP1 and the exocyst to the leading edge of migrating cells.

Its subcellular location is the cytoplasm. The protein resides in the perinuclear region. It localises to the cell projection. It is found in the growth cone. Its function is as follows. Component of the exocyst complex involved in the docking of exocytic vesicles with fusion sites on the plasma membrane. This is Exocyst complex component 8 (EXOC8) from Homo sapiens (Human).